The primary structure comprises 228 residues: Ribulose-phosphate 3-epimerase (228 aa).

Position 9 (S9) interacts with substrate. A divalent metal cation-binding residues include H34, D36, H68, and D177. The active-site Proton acceptor is the D36. Residues H68, 177–179, and 199–200 contribute to the substrate site; these read DGG and GS. D177 (proton donor) is an active-site residue.

This sequence belongs to the ribulose-phosphate 3-epimerase family. The cofactor is a divalent metal cation.

The catalysed reaction is D-ribulose 5-phosphate = D-xylulose 5-phosphate. It participates in carbohydrate degradation. Catalyzes the reversible epimerization of D-ribulose 5-phosphate to D-xylulose 5-phosphate. The chain is Ribulose-phosphate 3-epimerase from Buchnera aphidicola subsp. Schizaphis graminum (strain Sg).